We begin with the raw amino-acid sequence, 82 residues long: MNNSKDNPFRGAIARKARIYLREGLDCVYFLNKAGQAEPCPACTSLVFQGKTCEEHIHNNNLLSWQVVRQLERQTPQRQSSN.

Functionally, involved in host translation shutoff without degradating host RNA. By suppressing host gene expression, facilitates the evasion from host type I interferon immune response. In Avian infectious bronchitis virus (strain KB8523) (IBV), this protein is Host translation inhibitor 5b.